We begin with the raw amino-acid sequence, 237 residues long: Sugar fermentation stimulation protein homolog (237 aa).

The protein belongs to the SfsA family.

This chain is Sugar fermentation stimulation protein homolog, found in Actinobacillus pleuropneumoniae serotype 5b (strain L20).